A 179-amino-acid polypeptide reads, in one-letter code: Sodium/potassium-transporting ATPase subunit beta-1-interacting protein 3 (179 aa).

4 helical membrane passes run T5–L22, A35–I55, I62–F82, and A151–I171.

This sequence belongs to the NKAIN family. As to quaternary structure, interacts with atp1b1 C-terminus.

The protein resides in the cell membrane. The protein is Sodium/potassium-transporting ATPase subunit beta-1-interacting protein 3 (nkain3) of Xenopus laevis (African clawed frog).